A 65-amino-acid polypeptide reads, in one-letter code: Small ribosomal subunit protein eS27 (65 aa).

Positions 21, 24, 40, and 43 each coordinate Zn(2+). A C4-type zinc finger spans residues 21–43 (CRDCGNVQVVFARPSSTVTCNIC).

It belongs to the eukaryotic ribosomal protein eS27 family. In terms of assembly, part of the 30S ribosomal subunit. Requires Zn(2+) as cofactor.

The polypeptide is Small ribosomal subunit protein eS27 (Thermoplasma acidophilum (strain ATCC 25905 / DSM 1728 / JCM 9062 / NBRC 15155 / AMRC-C165)).